Consider the following 24-residue polypeptide: Formate ester dehydrogenase gamma chain (24 aa).

In terms of assembly, heterotrimer composed of an alpha, a beta and a gamma chain.

In Amycolatopsis methanolica, this protein is Formate ester dehydrogenase gamma chain.